The chain runs to 448 residues: MHFIAISINHRTADVALREQVAFRDDALRIAHEDLYETKSILENVILSTCNRTEVYAVVDQIHTGRYYIQRFLARAFGFEVDDIKAMSEVKVGDEAVEHLLRVTSGLDSIVLGETQILGQIRDAFFLAQSTGTTGTIFNHLFKQAITFAKRAHNETDIADNAVSVSYAAVELAKKVFGKLKSKQAIIIGAGEMSELSLLNLLGSGITDITVVNRTIENAMKLAAKHQVKYDELSSLPNLLESADIVISSTSAQSYIITNEMIERIAENRKQDSLVLIDIAVPRDIEPGISAITNIFNYDVDDLKGLVDANLRERQLAAATISEQIPAEIHAHNEWISMLGVVPVIRALREKAMAIQAETMDSIDRKLPGLSERERKIISKHTKSIINQMLKDPIKQAKELSSDKKSNEKLELFQNIFDIEAECPHEQAKQQKESKVKEISARRIFSFE.

Substrate contacts are provided by residues 49-52, S109, 114-116, and Q120; these read TCNR and ETQ. The active-site Nucleophile is the C50. 189-194 is an NADP(+) binding site; that stretch reads GAGEMS.

The protein belongs to the glutamyl-tRNA reductase family. In terms of assembly, homodimer.

It catalyses the reaction (S)-4-amino-5-oxopentanoate + tRNA(Glu) + NADP(+) = L-glutamyl-tRNA(Glu) + NADPH + H(+). Its pathway is porphyrin-containing compound metabolism; protoporphyrin-IX biosynthesis; 5-aminolevulinate from L-glutamyl-tRNA(Glu): step 1/2. Its function is as follows. Catalyzes the NADPH-dependent reduction of glutamyl-tRNA(Glu) to glutamate 1-semialdehyde (GSA). The chain is Glutamyl-tRNA reductase from Staphylococcus aureus (strain Mu3 / ATCC 700698).